The sequence spans 1049 residues: MRESVRKVLVIGSGPIKIAEAAEFDYSGSQALKALKEEGIETILVNSNVATVQTSRKFADKLYMIPVTWWAVEKVIERERPDGIMVGFGGQTALNVGVDLYNKGILQKYGVKVLGTPIEGIERALSREKFRETMINVGLPVPPSLSARSEEEALEKARQIGYPVMVRVSFNLGGRGSIVAWNEEELKRDIGRALSQSYIHEVLIEKYLHHWIELEYEVMRDKYGNSAVIACIENLDPMGVHTGESTVISPCQTLDNKEFQDMRFMSMDVAKSIDLVGECNVQFALDPKGYNYYVIETNPRMSRSSALASKATGYPLAYVSAKLALGYSLYEVLNKVSGSTCACFEPSLDYVVIKIPRWDLDKFENVEISLASEMKSVGEVMSIGRSFEESLQKAVRMLDIGEPGVVGGKIYFSKMTKEDALKNLKMRRPYWFLYAAKAFKEGATIDEVYEVTGINKFFLNKIKALVEFYEILRKQRNIDKDTLLQAKKLGFSDLQLAKALGVKESDIRKLREKWNIEPKVKQIDTLAGEWPAVTNYLYLTYNGTEDDIEFSEAGNKLLIIGAGGFRIGVSVEFDWSVVSLLDSSLKYFNDIAILNYNPETVSTDWDIARKLYFDEISVERVLDLIRKEKFTYVATFTGGQIGNNISKKLEEEGIRLLGTSGRSIDTAEDREKFSKLLDKLGIKQPEWISARSLEEVKEFISKVGYPVLIRPSYVLSGAAMKIVNNDLELMEYLKRATEVSPEHPVVISKYLNDAIEAEIDAAGDGKGVYGVVIEHVEEAGVHSGDATMSIPYRKLSSNVVNKMKENVHMIVRELEIKGPFNVQFVIKNNEPYIIELNLRASRSMPFSSKVVSKNIISLALDGILNGFGVDEFIELKPKSWGVKSPQFSWAQLKGAYPFLGPEMKSTGEAASLGTDFYDALLKSWLSSSPNKIPNKEGIALVYGTTNVEYLKIAAKNLIDYGITVYTLSEASIGIEEKSINDIIELIKNRKVEIVVTDGYLKHIDYEVRRIAVDYNIPIILNGRLGAEVTRAFSHPNVTYYEISEYGAGI.

The interval methionine 1–aspartate 399 is carboxyphosphate synthetic domain. 12 residues coordinate ATP: arginine 127, arginine 167, glycine 173, glycine 174, lysine 206, leucine 208, glutamate 213, glycine 239, valine 240, histidine 241, glutamine 282, and glutamate 296. An ATP-grasp 1 domain is found at arginine 131 to leucine 325. Mg(2+) contacts are provided by glutamine 282, glutamate 296, and asparagine 298. The Mn(2+) site is built by glutamine 282, glutamate 296, and asparagine 298. Residues isoleucine 400 to isoleucine 548 form an oligomerization domain region. Residues glutamate 549 to asparagine 930 form a carbamoyl phosphate synthetic domain region. Residues serine 674 to leucine 864 form the ATP-grasp 2 domain. ATP-binding residues include arginine 710, lysine 749, leucine 751, glutamate 756, glycine 780, valine 781, histidine 782, serine 783, glutamine 823, and glutamate 835. 3 residues coordinate Mg(2+): glutamine 823, glutamate 835, and asparagine 837. Residues glutamine 823, glutamate 835, and asparagine 837 each contribute to the Mn(2+) site. The region spanning asparagine 930–isoleucine 1049 is the MGS-like domain. The tract at residues lysine 931 to isoleucine 1049 is allosteric domain.

This sequence belongs to the CarB family. In terms of assembly, composed of two chains; the small (or glutamine) chain promotes the hydrolysis of glutamine to ammonia, which is used by the large (or ammonia) chain to synthesize carbamoyl phosphate. Tetramer of heterodimers (alpha,beta)4. It depends on Mg(2+) as a cofactor. Requires Mn(2+) as cofactor.

The catalysed reaction is hydrogencarbonate + L-glutamine + 2 ATP + H2O = carbamoyl phosphate + L-glutamate + 2 ADP + phosphate + 2 H(+). It carries out the reaction hydrogencarbonate + NH4(+) + 2 ATP = carbamoyl phosphate + 2 ADP + phosphate + 2 H(+). It participates in amino-acid biosynthesis; L-arginine biosynthesis; carbamoyl phosphate from bicarbonate: step 1/1. It functions in the pathway pyrimidine metabolism; UMP biosynthesis via de novo pathway; (S)-dihydroorotate from bicarbonate: step 1/3. Its function is as follows. Large subunit of the glutamine-dependent carbamoyl phosphate synthetase (CPSase). CPSase catalyzes the formation of carbamoyl phosphate from the ammonia moiety of glutamine, carbonate, and phosphate donated by ATP, constituting the first step of 2 biosynthetic pathways, one leading to arginine and/or urea and the other to pyrimidine nucleotides. The large subunit (synthetase) binds the substrates ammonia (free or transferred from glutamine from the small subunit), hydrogencarbonate and ATP and carries out an ATP-coupled ligase reaction, activating hydrogencarbonate by forming carboxy phosphate which reacts with ammonia to form carbamoyl phosphate. This is Carbamoyl phosphate synthase large chain from Sulfurisphaera tokodaii (strain DSM 16993 / JCM 10545 / NBRC 100140 / 7) (Sulfolobus tokodaii).